The primary structure comprises 184 residues: Class II hydrophobin 6 (184 aa).

Positions 1-16 (MNFMLLSAALASMAVA) are cleaved as a signal peptide. 4 disulfide bridges follow: C122-C169, C130-C160, C131-C143, and C170-C181.

The protein belongs to the cerato-ulmin hydrophobin family. In terms of assembly, homotetramer. Further self-assembles to form highly ordered films at water-air interfaces through intermolecular interactions. In terms of tissue distribution, expressed in the mycellium.

Its subcellular location is the secreted. Aerial growth, conidiation, and dispersal of filamentous fungi in the environment rely upon a capability of their secreting small amphipathic proteins called hydrophobins (HPBs) with low sequence identity. Class I can self-assemble into an outermost layer of rodlet bundles on aerial cell surfaces, conferring cellular hydrophobicity that supports fungal growth, development and dispersal; whereas Class II form highly ordered films at water-air interfaces through intermolecular interactions but contribute nothing to the rodlet structure. Hcf-6 is a class II hydrophobin that is involved in adhesion and in tomato plants infection. Is secreted to form a coat both around and beneath the fungus. This chain is Class II hydrophobin 6, found in Passalora fulva (Tomato leaf mold).